Reading from the N-terminus, the 431-residue chain is Glutamate-1-semialdehyde 2,1-aminomutase (431 aa).

Lysine 269 is subject to N6-(pyridoxal phosphate)lysine.

Belongs to the class-III pyridoxal-phosphate-dependent aminotransferase family. HemL subfamily. As to quaternary structure, homodimer. It depends on pyridoxal 5'-phosphate as a cofactor.

It is found in the cytoplasm. The enzyme catalyses (S)-4-amino-5-oxopentanoate = 5-aminolevulinate. It participates in porphyrin-containing compound metabolism; protoporphyrin-IX biosynthesis; 5-aminolevulinate from L-glutamyl-tRNA(Glu): step 2/2. Its pathway is porphyrin-containing compound metabolism; chlorophyll biosynthesis. In Chlorobium luteolum (strain DSM 273 / BCRC 81028 / 2530) (Pelodictyon luteolum), this protein is Glutamate-1-semialdehyde 2,1-aminomutase.